The primary structure comprises 79 residues: Acyl carrier protein (79 aa).

Residues 2-77 form the Carrier domain; the sequence is SDIEQRVKKI…QAIDYAKAHV (76 aa). An O-(pantetheine 4'-phosphoryl)serine modification is found at Ser-37.

The protein belongs to the acyl carrier protein (ACP) family. Post-translationally, 4'-phosphopantetheine is transferred from CoA to a specific serine of apo-ACP by AcpS. This modification is essential for activity because fatty acids are bound in thioester linkage to the sulfhydryl of the prosthetic group.

The protein resides in the cytoplasm. It participates in lipid metabolism; fatty acid biosynthesis. Functionally, carrier of the growing fatty acid chain in fatty acid biosynthesis. The chain is Acyl carrier protein from Janthinobacterium sp. (strain Marseille) (Minibacterium massiliensis).